A 158-amino-acid polypeptide reads, in one-letter code: Pathogenesis-related protein 2 (158 aa).

Belongs to the BetVI family.

In Petroselinum crispum (Parsley), this protein is Pathogenesis-related protein 2 (PR2).